A 329-amino-acid polypeptide reads, in one-letter code: MHPKVQSLLSKFPRVELIPWETPIQYLPNISKLVGADIYVKRDDLTGLGIGGNKIRKLEYLLGDAIIRKADVIITVGAVHSNHAFVTGLAAKKLGFDVVLVLRGKEELRGNYLLDKIMGIETRVYEAKDSFELMKYAEEVAKELEEKGRKPYIIPVGGASPVGTLGYVRASGEIAEQGNRIGVNFDSIVVATGSGGTLAGLSVGLAILRKETRAIGMAVGKFGETMVNKVEELAKATGEFIGVKNLKLKIELYDYSFGEYGKITREVAETIRLVGTKEGVILDPVYTGKAFYGLLDLAKKGELGEKILFIHTGGISGTFHYGDKILSFL.

K54 bears the N6-(pyridoxal phosphate)lysine mark.

It belongs to the ACC deaminase/D-cysteine desulfhydrase family. Requires pyridoxal 5'-phosphate as cofactor.

It carries out the reaction 1-aminocyclopropane-1-carboxylate + H2O = 2-oxobutanoate + NH4(+). In Pyrococcus furiosus (strain ATCC 43587 / DSM 3638 / JCM 8422 / Vc1), this protein is Putative 1-aminocyclopropane-1-carboxylate deaminase.